The sequence spans 349 residues: S-adenosylmethionine:tRNA ribosyltransferase-isomerase (349 aa).

This sequence belongs to the QueA family. In terms of assembly, monomer.

Its subcellular location is the cytoplasm. The enzyme catalyses 7-aminomethyl-7-carbaguanosine(34) in tRNA + S-adenosyl-L-methionine = epoxyqueuosine(34) in tRNA + adenine + L-methionine + 2 H(+). It functions in the pathway tRNA modification; tRNA-queuosine biosynthesis. Its function is as follows. Transfers and isomerizes the ribose moiety from AdoMet to the 7-aminomethyl group of 7-deazaguanine (preQ1-tRNA) to give epoxyqueuosine (oQ-tRNA). The polypeptide is S-adenosylmethionine:tRNA ribosyltransferase-isomerase (Cupriavidus pinatubonensis (strain JMP 134 / LMG 1197) (Cupriavidus necator (strain JMP 134))).